The chain runs to 195 residues: MSFRQRILEHRLEDSLEKLFSAFLSFCLEYHIPYAETISKQNHSIVAVTFDETYGLDIYQTMKERLPLDKQFYYINRKTDTYTIRGYDVAVRALEELATVISPLEILDKIHIFNISFVRSTNILYLGYTKIIKLSTVYSAVYQNKLYRLFAIYNRDITMLSRIRKYIITDYPKLFEQYFSLLPKFITDNYEVEQT.

This is an uncharacterized protein from Acidianus hospitalis (AFV-1).